Here is a 102-residue protein sequence, read N- to C-terminus: Small ribosomal subunit protein bS6 (102 aa).

This sequence belongs to the bacterial ribosomal protein bS6 family.

Binds together with bS18 to 16S ribosomal RNA. The sequence is that of Small ribosomal subunit protein bS6 from Solidesulfovibrio magneticus (strain ATCC 700980 / DSM 13731 / RS-1) (Desulfovibrio magneticus).